Here is a 240-residue protein sequence, read N- to C-terminus: Biosynthetic peptidoglycan transglycosylase (240 aa).

Residues 12–31 (ALLWFAGGSVLLVLVFRFVP) traverse the membrane as a helical segment.

The protein belongs to the glycosyltransferase 51 family.

The protein resides in the cell inner membrane. The enzyme catalyses [GlcNAc-(1-&gt;4)-Mur2Ac(oyl-L-Ala-gamma-D-Glu-L-Lys-D-Ala-D-Ala)](n)-di-trans,octa-cis-undecaprenyl diphosphate + beta-D-GlcNAc-(1-&gt;4)-Mur2Ac(oyl-L-Ala-gamma-D-Glu-L-Lys-D-Ala-D-Ala)-di-trans,octa-cis-undecaprenyl diphosphate = [GlcNAc-(1-&gt;4)-Mur2Ac(oyl-L-Ala-gamma-D-Glu-L-Lys-D-Ala-D-Ala)](n+1)-di-trans,octa-cis-undecaprenyl diphosphate + di-trans,octa-cis-undecaprenyl diphosphate + H(+). Its pathway is cell wall biogenesis; peptidoglycan biosynthesis. Functionally, peptidoglycan polymerase that catalyzes glycan chain elongation from lipid-linked precursors. The polypeptide is Biosynthetic peptidoglycan transglycosylase (Pseudomonas fluorescens (strain Pf0-1)).